We begin with the raw amino-acid sequence, 254 residues long: Protein Thf1 (254 aa).

Residues 183 to 217 (SDKLQKDLDLYRSNLEKMEQARITMEEAIQADRRK) are a coiled coil. Basic and acidic residues predominate over residues 213-227 (ADRRKREQREQEKLA). The interval 213–254 (ADRRKREQREQEKLAKAAAAEAPAALEASSDNPEPETSETPS) is disordered. Positions 228–240 (KAAAAEAPAALEA) are enriched in low complexity. Residues 245–254 (PEPETSETPS) are compositionally biased toward acidic residues.

The protein belongs to the THF1 family.

Its function is as follows. May be involved in photosynthetic membrane biogenesis. This Synechococcus elongatus (strain ATCC 33912 / PCC 7942 / FACHB-805) (Anacystis nidulans R2) protein is Protein Thf1.